Consider the following 73-residue polypeptide: MAEIKHYQFNVVMTCSGCSGAVNKVLTKLEPDVSKIDISLEKQLVDVYTTLPYDFILEKIKKTGKEVRSGKQL.

The 65-residue stretch at 4 to 68 folds into the HMA domain; sequence IKHYQFNVVM…KIKKTGKEVR (65 aa). Cu(+)-binding residues include Cys15 and Cys18.

The protein belongs to the ATX1 family. Homodimer. Interacts with CCC2 via the copper anion.

It localises to the cytoplasm. Its activity is regulated as follows. Tetrathiomolybdate directly and reversibly down-regulates copper delivery to secreted metalloenzymes. In terms of biological role, copper homeostasis factor that specifically transports copper to the secretory pathway for incorporation into copper enzymes destined for the cell surface or extracellular milieu. Shuttles copper to the transport ATPase CCC2 on a post-Golgi vesicle for eventual targeting to the cell-surface high-affinity iron uptake protein FET3. Protects against oxygen toxicity. The sequence is that of Copper chaperone ATX1 from Saccharomyces cerevisiae (strain ATCC 204508 / S288c) (Baker's yeast).